A 447-amino-acid chain; its full sequence is Argininosuccinate lyase (447 aa).

Belongs to the lyase 1 family. Argininosuccinate lyase subfamily.

Its subcellular location is the cytoplasm. It catalyses the reaction 2-(N(omega)-L-arginino)succinate = fumarate + L-arginine. It participates in amino-acid biosynthesis; L-arginine biosynthesis; L-arginine from L-ornithine and carbamoyl phosphate: step 3/3. This Bacteroides fragilis (strain YCH46) protein is Argininosuccinate lyase.